The chain runs to 315 residues: Probable cell division protein WhiA (315 aa).

The H-T-H motif DNA-binding region spans 278 to 312; it reads SLSDLAGMIEGQELTKSGINHRMRKLMQIVKELNH.

It belongs to the WhiA family.

Involved in cell division and chromosome segregation. This Oenococcus oeni (strain ATCC BAA-331 / PSU-1) protein is Probable cell division protein WhiA.